The chain runs to 1544 residues: Transcriptional activator GLI3 (1544 aa).

Polar residues-rich tracts occupy residues 1 to 10 (MEAQSHSSTT) and 402 to 429 (NPVQ…SSTG). 2 disordered regions span residues 1-83 (MEAQ…EERA) and 373-477 (SAFG…QEPE). Residues 463 to 476 (VKEEGDKDESKQEP) show a composition bias toward basic and acidic residues. The C2H2-type 1 zinc finger occupies 482–509 (TNCHWEGCSREFDTQEQLVHHINNDHIH). The C2H2-type 2; degenerate zinc-finger motif lies at 520-542 (LDCSREQKPFKAQYMLVVHMRRH). 3 C2H2-type zinc fingers span residues 548 to 572 (HKCT…LRSH), 578 to 603 (YVCE…NRTH), and 609 to 634 (YVCK…KTVH). 4 disordered regions span residues 622–728 (DPSS…YSNN), 865–919 (RSSG…DLPS), 1126–1155 (SVVL…VSKS), and 1327–1368 (HYQG…GNQS). The segment covering 634–650 (HGPEAHVTKKQRGDIHP) has biased composition (basic and acidic residues). Positions 660-685 (SHSQTRSPGQQTQGATGEQKDLNSTT) are enriched in polar residues. Residues 686 to 701 (SRREECLQVKAVKSEK) are compositionally biased toward basic and acidic residues. Positions 702 to 728 (PMTSQPSPGGQSTCSSEQSPISNYSNN) are enriched in polar residues. The span at 865–882 (RSSGISPCFSSRRSSDAS) shows a compositional bias: low complexity. The span at 1330–1355 (GVNQSSPMTLGQVSPTSQSSLHQGPQ) shows a compositional bias: polar residues.

It belongs to the GLI C2H2-type zinc-finger protein family. In terms of processing, phosphorylation is essential for its proteolytic processing. The repressor form (GLI3R), a C-terminally truncated form is generated from the full-length GLI3 protein (GLI3FL) through proteolytic processing.

It localises to the nucleus. It is found in the cytoplasm. In terms of biological role, has a dual function as a transcriptional activator and a repressor of the sonic hedgehog (Shh) pathway, and plays a role in limb development. The full-length GLI3 form (GLI3FL) acts as an activator (GLI3A) while GLI3R, its C-terminally truncated form, acts as a repressor. This chain is Transcriptional activator GLI3 (GLI3), found in Gallus gallus (Chicken).